The primary structure comprises 49 residues: Small ribosomal subunit protein eS31 (49 aa).

Cys-21, Cys-24, Cys-39, and Cys-42 together coordinate Zn(2+). A C4-type zinc finger spans residues 21-42; that stretch reads CPRCGPGTFLADHKNRLTCGKC.

This sequence belongs to the eukaryotic ribosomal protein eS31 family. In terms of assembly, part of the 30S ribosomal subunit. Zn(2+) serves as cofactor.

The protein is Small ribosomal subunit protein eS31 of Methanosarcina barkeri (strain Fusaro / DSM 804).